The following is a 132-amino-acid chain: uncharacterized protein (132 aa).

This is an uncharacterized protein from Bacillus subtilis (strain 168).